Consider the following 405-residue polypeptide: Protein held out wings (405 aa).

The region spanning 142 to 210 (YVPVREHPDF…HLSDDLHVLI (69 aa)) is the KH domain.

In terms of assembly, homodimer. Interacts with Sxl; promoting nuclear retention of msl-2 transcripts. In terms of tissue distribution, during embryogenesis, expression is seen in mesodermal precursors of somatic, visceral and pharyngeal muscle. Later in embryogenesis, expression is restricted to heart and muscle attachment sites of the epidermis. During onset of metamorphosis, expression is seen in muscle and muscle attachment cells.

The protein resides in the nucleus. RNA-binding protein involved in muscle development and dosage compensation. Vital role in steroid regulation of muscle development and to control heart rate. Required during embryogenesis, in late stages of somatic muscle development, for myotube migration and during metamorphosis for muscle reorganization. Required for integrin-mediated cell-adhesion in wing blade. Together with Sxl, acts as an inhibitor of dosage compensation in females by preventing production of msl-2 protein, an essential component of the MSL complex. Specifically binds to the 5'-UTR of msl-2 transcripts and cooperates with Sxl to promote nuclear retention of msl-2 mRNAs. The sequence is that of Protein held out wings (how) from Drosophila melanogaster (Fruit fly).